A 151-amino-acid chain; its full sequence is Large ribosomal subunit protein bL9 (151 aa).

Belongs to the bacterial ribosomal protein bL9 family.

Binds to the 23S rRNA. The protein is Large ribosomal subunit protein bL9 of Rhodococcus opacus (strain B4).